A 673-amino-acid chain; its full sequence is Cyclic nucleotide-binding domain-containing protein 2 (673 aa).

Positions 1-15 (MNRSANPEAASSTSH) are enriched in polar residues. Residues 1-89 (MNRSANPEAA…PQPKDRPGVQ (89 aa)) form a disordered region. Positions 43–86 (PADKSDTTESKSESGSDSRSEEDKESPASIKEIKAETPQPKDRP) are enriched in basic and acidic residues. 206–329 (CYRSYTESLQ…ETQYRYNFFR (124 aa)) provides a ligand contact to a nucleoside 3',5'-cyclic phosphate.

As to expression, testis-specific. Exclusively expressed in testicular germ cells while it is not present in mature sperm (at protein level).

The protein resides in the cytoplasm. It localises to the cytosol. In terms of biological role, essential for male fertility. Plays an important role in spermatogenesis and regulates sperm motility by controlling the development of the flagellar bending of sperm. The chain is Cyclic nucleotide-binding domain-containing protein 2 (Cnbd2) from Mus musculus (Mouse).